A 302-amino-acid chain; its full sequence is NmrA-like family domain-containing protein DDB_G0286605 (302 aa).

Residues 9–14 (GGTGYQ), 35–39 (RNPES), 56–57 (DE), 78–80 (TNS), lysine 130, and 157–160 (YFQN) contribute to the NADP(+) site.

Belongs to the NmrA-type oxidoreductase family.

In terms of biological role, may be a redox sensor protein. In Dictyostelium discoideum (Social amoeba), this protein is NmrA-like family domain-containing protein DDB_G0286605.